Reading from the N-terminus, the 161-residue chain is Regulator of ribonuclease activity A (161 aa).

Belongs to the RraA family. Homotrimer. Binds to both RNA-binding sites in the C-terminal region of Rne and to RhlB.

It is found in the cytoplasm. In terms of biological role, globally modulates RNA abundance by binding to RNase E (Rne) and regulating its endonucleolytic activity. Can modulate Rne action in a substrate-dependent manner by altering the composition of the degradosome. Modulates RNA-binding and helicase activities of the degradosome. The sequence is that of Regulator of ribonuclease activity A from Idiomarina loihiensis (strain ATCC BAA-735 / DSM 15497 / L2-TR).